The following is a 445-amino-acid chain: Rab GDP dissociation inhibitor beta (445 aa).

N-acetylmethionine is present on Met-1. Residue Lys-57 is modified to N6-succinyllysine. Position 61 is a phosphoserine (Ser-61). An N6-acetyllysine modification is found at Lys-112. A Phosphoserine modification is found at Ser-130. Position 269 is an N6-acetyllysine (Lys-269). Ser-382 is subject to Phosphoserine.

The protein belongs to the Rab GDI family. In terms of assembly, interacts with RHOH. Interacts with the GDP-bound inactive forms of RAB3A, RAB3B, RAB3C, RAB5A, RAB5B, RAB5C, RAB8A, RAB8B, RAB10, RAB12, RAB35, and RAB43; binds RAB3D to a lesser extent. Interacts with DZIP1; this interaction negatively regulates the interaction of GDI2 with GDP-bound RAB8A. As to expression, ubiquitous.

The protein localises to the cytoplasm. It localises to the membrane. Its subcellular location is the golgi apparatus. The protein resides in the trans-Golgi network. GDP-dissociation inhibitor preventing the GDP to GTP exchange of most Rab proteins. By keeping these small GTPases in their inactive GDP-bound form regulates intracellular membrane trafficking. Negatively regulates protein transport to the cilium and ciliogenesis through the inhibition of RAB8A. The chain is Rab GDP dissociation inhibitor beta (GDI2) from Homo sapiens (Human).